The sequence spans 1083 residues: RecBCD enzyme subunit RecB (1083 aa).

In terms of domain architecture, UvrD-like helicase ATP-binding spans 1-323; that stretch reads MKVFDLLGPL…QTLGTNWRSD (323 aa). Residues 1-704 form a DNA-binding and helicase activity, interacts with RecC region; it reads MKVFDLLGPL…RGRAPGEAIV (704 aa). 21–28 contacts ATP; that stretch reads ASAGTGKT. Residues 349-607 form the UvrD-like helicase C-terminal domain; that stretch reads VQARHQGHRL…QIMTVWVSKG (259 aa). The segment at 765 to 1083 is nuclease activity, interacts with RecD and RecA; the sequence is AWKRTSYSGL…LSKLLDAEAP (319 aa). His830, Asp962, and Asp975 together coordinate Mg(2+). Catalysis depends on Asp975, which acts as the For nuclease activity.

Belongs to the helicase family. UvrD subfamily. In terms of assembly, heterotrimer of RecB, RecC and RecD. All subunits contribute to DNA-binding. Interacts with RecA. Mg(2+) serves as cofactor.

It catalyses the reaction Exonucleolytic cleavage (in the presence of ATP) in either 5'- to 3'- or 3'- to 5'-direction to yield 5'-phosphooligonucleotides.. The catalysed reaction is Couples ATP hydrolysis with the unwinding of duplex DNA by translocating in the 3'-5' direction.. It carries out the reaction ATP + H2O = ADP + phosphate + H(+). A helicase/nuclease that prepares dsDNA breaks (DSB) for recombinational DNA repair. Binds to DSBs and unwinds DNA via a highly rapid and processive ATP-dependent bidirectional helicase activity. Holoenzyme degrades any linearized DNA that is unable to undergo homologous recombination. In the holoenzyme this subunit contributes DNA-dependent ATPase activity, exonuclease activity and 3'-5' helicase activity. Unlike the case in E.coli, suppresses RecA-dependent homologous recombination, is instead required for single-strand annealing pathway repair of DSB. This Mycolicibacterium smegmatis (strain ATCC 700084 / mc(2)155) (Mycobacterium smegmatis) protein is RecBCD enzyme subunit RecB.